Reading from the N-terminus, the 268-residue chain is NH(3)-dependent NAD(+) synthetase (268 aa).

46 to 53 (GISGGQDS) is an ATP binding site. A Mg(2+)-binding site is contributed by D52. Residue R140 participates in deamido-NAD(+) binding. T160 lines the ATP pocket. E165 lines the Mg(2+) pocket. Positions 173 and 180 each coordinate deamido-NAD(+). Residues K189 and T211 each contribute to the ATP site. 260–261 (HK) provides a ligand contact to deamido-NAD(+).

This sequence belongs to the NAD synthetase family. As to quaternary structure, homodimer.

The catalysed reaction is deamido-NAD(+) + NH4(+) + ATP = AMP + diphosphate + NAD(+) + H(+). It participates in cofactor biosynthesis; NAD(+) biosynthesis; NAD(+) from deamido-NAD(+) (ammonia route): step 1/1. Catalyzes the ATP-dependent amidation of deamido-NAD to form NAD. Uses ammonia as a nitrogen source. This is NH(3)-dependent NAD(+) synthetase from Buchnera aphidicola subsp. Schizaphis graminum (strain Sg).